A 285-amino-acid chain; its full sequence is N(G),N(G)-dimethylarginine dimethylaminohydrolase 1 (285 aa).

Alanine 2 bears the N-acetylalanine mark. Leucine 30, aspartate 73, glutamate 78, aspartate 79, arginine 98, and arginine 145 together coordinate substrate. Histidine 173 serves as the catalytic Proton donor. Position 222 is an S-nitrosocysteine (cysteine 222). A substrate-binding site is contributed by valine 268. S-nitrosocysteine is present on cysteine 274. Cysteine 274 serves as the catalytic Nucleophile. Position 274 (cysteine 274) interacts with Zn(2+).

As to quaternary structure, monomer. As to expression, widely distributed, highest concentrations found in brain, brain cortex and kidney (at protein level).

It carries out the reaction N(omega),N(omega)-dimethyl-L-arginine + H2O = dimethylamine + L-citrulline. The enzyme catalyses N(omega)-methyl-L-arginine + H2O = L-citrulline + methylamine. Copurifies with a tightly bound zinc ion. Activated by release of zinc. His and other agents that promote the release of bound zinc ions activate the enzyme (in vitro). Inhibited by S-nitrosylation. Zinc protects the protein against S-nitrosylation. Hydrolyzes N(G),N(G)-dimethyl-L-arginine (ADMA) and N(G)-monomethyl-L-arginine (MMA) which act as inhibitors of NOS. Has therefore a role in the regulation of nitric oxide generation. This Bos taurus (Bovine) protein is N(G),N(G)-dimethylarginine dimethylaminohydrolase 1 (DDAH1).